The following is a 208-amino-acid chain: MAKKAKYPDVPIRFSETFSDTNLYIVLLIGVPLYGVITSYLFNREYAESTLKNLLTIPVSRISLIVSKLVLLLIWIMMLTLIAWVLTLLFGLIGQFEGLSSAVLIEGFKQFMIGGALLFFLVSPIIFVTLLFKNYVPTIIFTIIISMVSIMVYGTEYSALFPWSAVWVIASGTFFPEYPPEYSFISVAATTVLGLAATIVYFKKIDIH.

A run of 6 helical transmembrane segments spans residues L23–N43, V70–F90, F111–L131, Y135–T155, A159–P179, and Y182–F202.

Its subcellular location is the cell membrane. Functionally, part of the binding-protein-dependent transport system for bacitracin that confer resistance to this antibiotic; probably responsible for the translocation of the substrate across the membrane. This is Bacitracin transport permease protein BCRB (bcrB) from Bacillus licheniformis.